The primary structure comprises 276 residues: 4-deoxy-L-threo-5-hexosulose-uronate ketol-isomerase (276 aa).

Zn(2+) is bound by residues His194, His196, Glu201, and His243.

The protein belongs to the KduI family. Zn(2+) serves as cofactor.

It catalyses the reaction 5-dehydro-4-deoxy-D-glucuronate = 3-deoxy-D-glycero-2,5-hexodiulosonate. It functions in the pathway glycan metabolism; pectin degradation; 2-dehydro-3-deoxy-D-gluconate from pectin: step 4/5. Its function is as follows. Catalyzes the isomerization of 5-dehydro-4-deoxy-D-glucuronate to 3-deoxy-D-glycero-2,5-hexodiulosonate. The polypeptide is 4-deoxy-L-threo-5-hexosulose-uronate ketol-isomerase (Halalkalibacterium halodurans (strain ATCC BAA-125 / DSM 18197 / FERM 7344 / JCM 9153 / C-125) (Bacillus halodurans)).